Reading from the N-terminus, the 900-residue chain is E3 ubiquitin-protein ligase BRE1-like 2 (900 aa).

The interval 1–31 (MENQESDEPMQKKPHLLDSVSPNSMARNSSP) is disordered. Positions 20 to 31 (VSPNSMARNSSP) are enriched in polar residues. Coiled-coil stretches lie at residues 63-96 (TVLQ…LQLN), 217-300 (EDAT…KDAA), 437-660 (SRIE…AEME), and 706-737 (SEKQ…EQMK). The RING-type zinc finger occupies 848–887 (CGVCFDRPKEVVIVKCYHLFCQQCIQRSLEIRHRKCPGCG).

Belongs to the BRE1 family. May act as a tetramer consisting of two copies of HUB1 and two copies of HUB2. As to expression, ubiquitously expressed.

The protein localises to the nucleus. It catalyses the reaction S-ubiquitinyl-[E2 ubiquitin-conjugating enzyme]-L-cysteine + [acceptor protein]-L-lysine = [E2 ubiquitin-conjugating enzyme]-L-cysteine + N(6)-ubiquitinyl-[acceptor protein]-L-lysine.. Its pathway is protein modification; protein ubiquitination. E3 ubiquitin-protein ligase that monoubiquitinates H2B to form H2BK143ub1. H2BK143ub1 gives a specific tag for epigenetic transcriptional activation and is also prerequisite for H3K4me and maybe H3K79me. It thereby plays a central role in histone code and gene regulation. Forms a ubiquitin ligase complex in cooperation with the E2 enzyme UBC2/RAD6. This is E3 ubiquitin-protein ligase BRE1-like 2 (HUB2) from Arabidopsis thaliana (Mouse-ear cress).